Consider the following 880-residue polypeptide: Interference hedgehog (880 aa).

An N-terminal signal peptide occupies residues 1–20 (MTLLTSSLLFFSLLTSRLEA). Topologically, residues 21-703 (IPVLEKSPAH…ETFNMSPMLT (683 aa)) are extracellular. Ig-like C2-type domains follow at residues 45–142 (PGVR…IARL), 132–234 (PLVV…IQLT), 252–340 (PHLL…YIKV), and 346–432 (PQIV…LQVN). Intrachain disulfides connect C68–C126, C173–C220, C276–C324, and C367–C414. N-linked (GlcNAc...) asparagine glycosylation is found at N102 and N209. The disordered stretch occupies residues 426–467 (GTLLQVNPKQIQEPRESGGTHRPKPNQGSKQKQMYPPTPPNV). 2 consecutive Fibronectin type-III domains span residues 461–567 (PPTP…LQPG) and 575–670 (VPEL…TQRP). An N-linked (GlcNAc...) asparagine glycan is attached at N466. Heparin contacts are provided by R497, K501, K503, and R541. N557 is a glycosylation site (N-linked (GlcNAc...) asparagine). Positions 662–697 (LKQGRTQRPKTSTTEEPTLQMGDRDTTTPSHNETFN) are disordered. 2 stretches are compositionally biased toward polar residues: residues 665–678 (GRTQRPKTSTTEEP) and 688–697 (TTPSHNETFN). Residue N693 is glycosylated (N-linked (GlcNAc...) asparagine). Residues 704 to 724 (GTIGGGAVLILLLISTCLCVC) form a helical membrane-spanning segment. The Cytoplasmic portion of the chain corresponds to 725-880 (RRRSSRSRGN…SSGSLNSVGV (156 aa)). 2 disordered regions span residues 728–762 (SSRSRGNNPNKPRMAELRDDFVPLGNCSPTKQRQR) and 775–880 (QQQQ…SVGV). 2 stretches are compositionally biased toward low complexity: residues 823–837 (RAGGSNGSNNGNNNN) and 864–880 (SSRSENLSSGSLNSVGV).

This sequence belongs to the immunoglobulin superfamily. IHOG family. In terms of assembly, homodimer. Heterotetramer; 2 iHog chains bind 2 hh chains when facilitated by heparin, heparin is required to promote high-affinity interactions between hh and iHog.

The protein localises to the membrane. Its function is as follows. Mediates response to the active Hedgehog (Hh) protein signal in embryos, functioning upstream or at the level of patched (ptc). In Drosophila yakuba (Fruit fly), this protein is Interference hedgehog.